The sequence spans 571 residues: Acetolactate synthase large subunit (571 aa).

E51 is a binding site for thiamine diphosphate. Residues R153, 261-282, and 304-323 each bind FAD; these read HGTY…IGVR and DIDP…IVGD. Residues 394 to 474 form a thiamine pyrophosphate binding region; that stretch reads QHQMFTALYY…VLILNLNNSS (81 aa). The Mg(2+) site is built by D445 and N472.

Belongs to the TPP enzyme family. In terms of assembly, dimer of large and small chains. Requires Mg(2+) as cofactor. Thiamine diphosphate serves as cofactor.

It carries out the reaction 2 pyruvate + H(+) = (2S)-2-acetolactate + CO2. Its pathway is amino-acid biosynthesis; L-isoleucine biosynthesis; L-isoleucine from 2-oxobutanoate: step 1/4. The protein operates within amino-acid biosynthesis; L-valine biosynthesis; L-valine from pyruvate: step 1/4. The protein is Acetolactate synthase large subunit (ilvI) of Buchnera aphidicola subsp. Schizaphis graminum (strain Sg).